We begin with the raw amino-acid sequence, 456 residues long: Bacteriochlorophyllide d C-12(1)-methyltransferase (456 aa).

The Radical SAM core domain occupies 178–405; the sequence is HAKKYSQLIP…MFEPKKLGGE (228 aa). [4Fe-4S] cluster-binding residues include Cys-194, Cys-198, and Cys-201.

The protein belongs to the radical SAM superfamily. It depends on [4Fe-4S] cluster as a cofactor.

It is found in the cytoplasm. The enzyme catalyses 8-ethyl-12-methyl-3-vinylbacteriochlorophyllide d + S-adenosyl-L-methionine = 8,12-diethyl-3-vinylbacteriochlorophyllide d + S-adenosyl-L-homocysteine + H(+). It functions in the pathway porphyrin-containing compound metabolism; bacteriochlorophyll biosynthesis (light-independent). Involved in the biosynthesis of the major light-harvesting pigment bacteriochlorophyll c (BChlc), which confers a significant competitive advantage to green sulfur bacteria living at limiting red and near-infrared light intensities. BchR is a methyltransferase that adds a single methyl group to the methyl carbon at the C-12(1) position of 8-ethyl-12-methyl-3-vinylbacteriochlorophyllide d to yield 8,12-diethyl-3-vinylbacteriochlorophyllide d. This is Bacteriochlorophyllide d C-12(1)-methyltransferase from Chlorobaculum tepidum (strain ATCC 49652 / DSM 12025 / NBRC 103806 / TLS) (Chlorobium tepidum).